A 97-amino-acid chain; its full sequence is Large ribosomal subunit protein eL21 (97 aa).

It belongs to the eukaryotic ribosomal protein eL21 family.

This Archaeoglobus fulgidus (strain ATCC 49558 / DSM 4304 / JCM 9628 / NBRC 100126 / VC-16) protein is Large ribosomal subunit protein eL21 (rpl21e).